The chain runs to 542 residues: Aspartate kinase FUB3 (542 aa).

ACT domains lie at 404 to 472 (ILSN…VLPD) and 478 to 542 (LVGA…KSAI).

This sequence belongs to the aspartokinase family.

The enzyme catalyses L-aspartate + ATP = 4-phospho-L-aspartate + ADP. It functions in the pathway mycotoxin biosynthesis. Functionally, aspartate kinase; part of the gene cluster that mediates the biosynthesis of fusaric acid, a mycotoxin with low to moderate toxicity to animals and humans, but with high phytotoxic properties. L-aspartate is suggested as fusaric acid amino acid precursor that is activated and further processed to O-acetyl-L-homoserine by cluster enzymes aspartate kinase FUB3 and homoserine O-acetyltransferase FUB5, as well as enzymes of the primary metabolism. The polyketide synthase (PKS) FUB1 generates the triketide trans-2-hexenal which is presumptively released by the hydrolase FUB4 and linked to the NRPS-bound amino acid precursor by NAD(P)-dependent dehydrogenase FUB6. FUB1, FUB4, and the non-canonical NRPS Fub8 may form an enzyme complex. Further processing of the NRPS-bound intermediate might be carried out by FUB6 and the sulfhydrylase FUB7, enabling a spontaneous electrocyclization to close the carbon backbone of fusaric acid. Dihydrofusaric acid is likely to be released via reduction by the thioester reductase (TR) domain of FUB8 whereupon the final oxidation to fusaric acid may (also) be performed by the FMN-dependent dehydrogenase FUB9. This Fusarium oxysporum f. sp. lycopersici (strain 4287 / CBS 123668 / FGSC 9935 / NRRL 34936) (Fusarium vascular wilt of tomato) protein is Aspartate kinase FUB3.